Here is a 172-residue protein sequence, read N- to C-terminus: uncharacterized protein (172 aa).

Residues 3 to 171 (KKVAIILTNE…FNREIVNQLN (169 aa)) enclose the PfpI endopeptidase domain.

Belongs to the peptidase C56 family.

This is an uncharacterized protein from Staphylococcus saprophyticus subsp. saprophyticus (strain ATCC 15305 / DSM 20229 / NCIMB 8711 / NCTC 7292 / S-41).